Reading from the N-terminus, the 276-residue chain is MDSQMLVALGLSLVGGLSTSLGALFVVLSETPNMKMLGLLQGFASGLMLSISFLDLAHNAINSIGFFKANLWFFGGVIFFACITKFIPEPTLGPSTDGKRRKKNGDEGGKDMMKKHRKQVLYSGLITAIGISLHNFPEGMAVFLGSIKGMRVGVNLALAIALHNIPEGVAVALPIYFATESKWQAFKLATLSGLAEPLGVIIVAYLFPRSLSPEILEGLLGAVGGIMAFLTLHEMLPLAFDYAGQKQAVKAVFFGMACMSASLYFLELSLPETMSL.

At 1–6 (MDSQML) the chain is on the cytoplasmic side. A helical transmembrane segment spans residues 7–27 (VALGLSLVGGLSTSLGALFVV). Residues 28–35 (LSETPNMK) are Lumenal-facing. Residues 36 to 56 (MLGLLQGFASGLMLSISFLDL) form a helical membrane-spanning segment. The Cytoplasmic segment spans residues 57-63 (AHNAINS). The chain crosses the membrane as a helical span at residues 64 to 84 (IGFFKANLWFFGGVIFFACIT). Over 85 to 123 (KFIPEPTLGPSTDGKRRKKNGDEGGKDMMKKHRKQVLYS) the chain is Lumenal. A helical transmembrane segment spans residues 124 to 144 (GLITAIGISLHNFPEGMAVFL). The Cytoplasmic segment spans residues 145–156 (GSIKGMRVGVNL). A helical membrane pass occupies residues 157–177 (ALAIALHNIPEGVAVALPIYF). The Lumenal portion of the chain corresponds to 178–187 (ATESKWQAFK). A helical transmembrane segment spans residues 188-208 (LATLSGLAEPLGVIIVAYLFP). The Cytoplasmic segment spans residues 209-219 (RSLSPEILEGL). A helical transmembrane segment spans residues 220–240 (LGAVGGIMAFLTLHEMLPLAF). Over 241–250 (DYAGQKQAVK) the chain is Lumenal. The chain crosses the membrane as a helical span at residues 251 to 271 (AVFFGMACMSASLYFLELSLP). Residues 272-276 (ETMSL) lie on the Cytoplasmic side of the membrane.

It belongs to the ZIP transporter (TC 2.A.5) family. ZupT subfamily. In terms of tissue distribution, expressed in hypocotyls, cotyledons, leaves and anthers.

It is found in the endoplasmic reticulum membrane. In terms of biological role, zinc transporter involved response to salt stress. May act through the regulation of zinc levels required to induce the unfolded protein response (UPR) pathway. In Arabidopsis thaliana (Mouse-ear cress), this protein is Zinc transporter ZTP29 (ZTP29).